The following is a 283-amino-acid chain: tRNA dimethylallyltransferase (283 aa).

Residues 5–8 form an interaction with substrate tRNA region; that stretch reads DSML.

The protein belongs to the IPP transferase family. Monomer. Mg(2+) serves as cofactor.

It catalyses the reaction adenosine(37) in tRNA + dimethylallyl diphosphate = N(6)-dimethylallyladenosine(37) in tRNA + diphosphate. In terms of biological role, catalyzes the transfer of a dimethylallyl group onto the adenine at position 37 in tRNAs that read codons beginning with uridine, leading to the formation of N6-(dimethylallyl)adenosine (i(6)A). This is tRNA dimethylallyltransferase from Desulforamulus reducens (strain ATCC BAA-1160 / DSM 100696 / MI-1) (Desulfotomaculum reducens).